A 188-amino-acid polypeptide reads, in one-letter code: UPF0340 protein SSU98_0310 (188 aa).

Belongs to the UPF0340 family.

In Streptococcus suis (strain 98HAH33), this protein is UPF0340 protein SSU98_0310.